The chain runs to 363 residues: Zinc phosphodiesterase ELAC protein 1 (363 aa).

7 residues coordinate Zn(2+): H62, H64, D66, H67, H182, D253, and H313. Residue D66 is the Proton acceptor of the active site.

It belongs to the RNase Z family. In terms of assembly, homodimer. Requires Zn(2+) as cofactor. Widely expressed. Expressed in heart, brain, placenta, lung, liver, skeletal muscle, kidney and pancreas.

The protein localises to the cytoplasm. It localises to the cytosol. Its subcellular location is the nucleus. The enzyme catalyses Endonucleolytic cleavage of RNA, removing extra 3' nucleotides from tRNA precursor, generating 3' termini of tRNAs. A 3'-hydroxy group is left at the tRNA terminus and a 5'-phosphoryl group is left at the trailer molecule.. Functionally, zinc phosphodiesterase, which displays some tRNA 3'-processing endonuclease activity. Specifically involved in tRNA repair: acts downstream of the ribosome-associated quality control (RQC) pathway by removing a 2',3'-cyclic phosphate from tRNAs following cleavage by ANKZF1. tRNAs are then processed by TRNT1. The polypeptide is Zinc phosphodiesterase ELAC protein 1 (Homo sapiens (Human)).